Reading from the N-terminus, the 367-residue chain is Homoserine O-acetyltransferase (367 aa).

The AB hydrolase-1 domain occupies 41–339; that stretch reads NLIVLEHALT…PVGHDAFLTE (299 aa). Ser136 (nucleophile) is an active-site residue. Arg205 provides a ligand contact to substrate. Active-site residues include Asp303 and His333. Residue Asp334 participates in substrate binding.

It belongs to the AB hydrolase superfamily. MetX family. Homodimer.

The protein resides in the cytoplasm. It catalyses the reaction L-homoserine + acetyl-CoA = O-acetyl-L-homoserine + CoA. The protein operates within amino-acid biosynthesis; L-methionine biosynthesis via de novo pathway; O-acetyl-L-homoserine from L-homoserine: step 1/1. Transfers an acetyl group from acetyl-CoA to L-homoserine, forming acetyl-L-homoserine. The sequence is that of Homoserine O-acetyltransferase from Corynebacterium diphtheriae (strain ATCC 700971 / NCTC 13129 / Biotype gravis).